Consider the following 75-residue polypeptide: DNA-directed RNA polymerase subunit omega (75 aa).

It belongs to the RNA polymerase subunit omega family. The RNAP catalytic core consists of 2 alpha, 1 beta, 1 beta' and 1 omega subunit. When a sigma factor is associated with the core the holoenzyme is formed, which can initiate transcription.

It carries out the reaction RNA(n) + a ribonucleoside 5'-triphosphate = RNA(n+1) + diphosphate. Its function is as follows. Promotes RNA polymerase assembly. Latches the N- and C-terminal regions of the beta' subunit thereby facilitating its interaction with the beta and alpha subunits. The polypeptide is DNA-directed RNA polymerase subunit omega (Nitratidesulfovibrio vulgaris (strain DSM 19637 / Miyazaki F) (Desulfovibrio vulgaris)).